The sequence spans 339 residues: Thymidine kinase (339 aa).

Residue 11-18 (GAFGIGKT) coordinates ATP. Catalysis depends on glutamate 39, which acts as the Proton acceptor. Substrate is bound by residues tyrosine 59 and glutamine 83. Arginine 176 is a binding site for ATP. Arginine 182 lines the substrate pocket.

It belongs to the herpesviridae thymidine kinase family. In terms of assembly, homodimer.

The catalysed reaction is thymidine + ATP = dTMP + ADP + H(+). Functionally, catalyzes the transfer of the gamma-phospho group of ATP to thymidine to generate dTMP in the salvage pathway of pyrimidine synthesis. The dTMP serves as a substrate for DNA polymerase during viral DNA replication. Allows the virus to be reactivated and to grow in non-proliferative cells lacking a high concentration of phosphorylated nucleic acid precursors. This is Thymidine kinase from Amazona oratrix (yellow-headed parrot).